Consider the following 92-residue polypeptide: Small ribosomal subunit protein uS19 (92 aa).

This sequence belongs to the universal ribosomal protein uS19 family.

Functionally, protein S19 forms a complex with S13 that binds strongly to the 16S ribosomal RNA. This is Small ribosomal subunit protein uS19 from Acidiphilium cryptum (strain JF-5).